The sequence spans 469 residues: Probable ribonuclease FAU-1 (469 aa).

This sequence belongs to the FAU-1 family.

In terms of biological role, probable RNase involved in rRNA stability through maturation and/or degradation of precursor rRNAs. Binds to RNA in loop regions with AU-rich sequences. In Ignicoccus hospitalis (strain KIN4/I / DSM 18386 / JCM 14125), this protein is Probable ribonuclease FAU-1.